The following is a 737-amino-acid chain: SANT and BTB domain regulator of class switch recombination (737 aa).

One can recognise an SANT domain in the interval 21–59 (DMILYPLIGIPQTINWETVARLVPGLTPKECVKRFDELK). Residues 147 to 255 (MVIHVCDEAK…QCIQYCHKNM (109 aa)) form the BTB domain. Residues 555–576 (SEEEEYTTGSEVTEDEVGDEEE) show a composition bias toward acidic residues. Residues 555 to 618 (SEEEEYTTGS…TLEKSTSRDV (64 aa)) form a disordered region. Positions 580–595 (KQRKKEKPKKFTKPPK) are enriched in basic residues. Residues 604–615 (QKKEKTLEKSTS) are compositionally biased toward basic and acidic residues.

The protein belongs to the KIAA1841 family. As to quaternary structure, homodimer. Interacts (via the BTB domain) with HDAC1 and NCOR2.

In terms of biological role, negatively regulates class switch recombination or isotype switching in splenic B-cells. This Rattus norvegicus (Rat) protein is SANT and BTB domain regulator of class switch recombination.